The chain runs to 138 residues: Superoxide dismutase [Mn] (138 aa).

Positions 1, 49, 133, and 137 each coordinate Mn(2+).

This sequence belongs to the iron/manganese superoxide dismutase family. It depends on Mn(2+) as a cofactor.

It catalyses the reaction 2 superoxide + 2 H(+) = H2O2 + O2. Its function is as follows. Destroys superoxide anion radicals which are normally produced within the cells and which are toxic to biological systems. The chain is Superoxide dismutase [Mn] (sodA) from Mycobacterium malmoense.